The primary structure comprises 561 residues: MASNSHNNYNTPRRQNYDVPKAWEEDSLYENIDFLTQPAVSSDTSEDEEPLPLGRETGRGSRGSTRPKTPRGLVRPRQDADNPSSDEGFDWEPLESFTSQPGAFSFLEPPRLSSSNTASGLRSSCSDFTILGSSGENPTSHANLSEEEMYEEIPPLASNPSDERHPRQLSGAVAQGAIRKSPRKLKFKPAKFKGLSSSLLNPFTASDSGRRARRQTPTCQPGFTPIFQDLGEPHYVKACTVFFEGCMAAGKTTLLNFARQTLSDDEALTIPEPMRFWTEVYTNVLSQIVKINKECKPGKTSTTAELVSCQLKFATPLKTQSLFLQRSVKKDSEMQPVGPLDKWVIVDRHQLSALVVFPLVLMRRGMLSFSDFFNLLGMFEAHPGEVIALMSVNVEENFTRLKKRGRVCERHIDRDYIKEIKGSFNAAYCAWLFLQYFSIQTTMQICMGLSSLDEACATEGVCHTTASRIWNNSMLVTLSDIISQFSNDYTVQNVCYNFFSQLSTLKFVVIDLSAFRHDVPGAWGEFYMQVMKNGDIKTRVMDFTAIKALADTAHNTHASLD.

Polar residues-rich tracts occupy residues 1 to 14 and 112 to 122; these read MASNSHNNYNTPRR and LSSSNTASGLR. Disordered regions lie at residues 1-22 and 34-122; these read MASNSHNNYNTPRRQNYDVPKA and FLTQ…SGLR. An ATP-binding site is contributed by 245-252; that stretch reads GCMAAGKT. Catalysis depends on Glu-272, which acts as the Proton acceptor. A substrate-binding site is contributed by Gln-310. Position 400 (Arg-400) interacts with ATP. Arg-406 is a substrate binding site.

Belongs to the herpesviridae thymidine kinase family. Homodimer.

The catalysed reaction is thymidine + ATP = dTMP + ADP + H(+). Its function is as follows. Catalyzes the transfer of the gamma-phospho group of ATP to thymidine to generate dTMP in the salvage pathway of pyrimidine synthesis. The dTMP serves as a substrate for DNA polymerase during viral DNA replication. Allows the virus to be reactivated and to grow in non-proliferative cells lacking a high concentration of phosphorylated nucleic acid precursors. The chain is Thymidine kinase from Connochaetes taurinus (Blue wildebeest).